The primary structure comprises 251 residues: MAEPRTLVLLRHGNSDWNQKNLFTGWVDVELSEQGVAEGQRAGELLAESGILPDVLHTSVLIRAIDTANIALKRAGRSWIPVQRTWRLNERHYGALQGKDKAQTLAEYGPEQFATWRRSFDVPPPPIADDDEYSQSADPRYADLGDTLPRTECLKDVIERMLPYWESDIQPDLASGRTVLVTAHGNSLRALVKHLDGISDADIAELNIPTGIPLVYRLDEDFRPIVPGGEYLDPEAAAAGAAAVAAQGSKK.

Substrate-binding positions include 11–18 (RHGNSDWN), 24–25 (TG), Arg-63, 90–93 (ERHY), Lys-101, 117–118 (RR), and 185–186 (GN). Residue His-12 is the Tele-phosphohistidine intermediate of the active site. The active-site Proton donor/acceptor is Glu-90.

The protein belongs to the phosphoglycerate mutase family. BPG-dependent PGAM subfamily.

The enzyme catalyses (2R)-2-phosphoglycerate = (2R)-3-phosphoglycerate. Its pathway is carbohydrate degradation; glycolysis; pyruvate from D-glyceraldehyde 3-phosphate: step 3/5. Catalyzes the interconversion of 2-phosphoglycerate and 3-phosphoglycerate. The chain is 2,3-bisphosphoglycerate-dependent phosphoglycerate mutase from Clavibacter sepedonicus (Clavibacter michiganensis subsp. sepedonicus).